Here is a 75-residue protein sequence, read N- to C-terminus: MKFFTCLLLLLVVLTVVFDNVDACDRSCTGVMGHPSCATCCACFTSAGKRHADGQHSRMKVRTGAKNLLKRMPLH.

Positions 1-23 (MKFFTCLLLLLVVLTVVFDNVDA) are cleaved as a signal peptide. Cystine bridges form between C24–C28, C37–C40, and C41–C43. Residues 24–50 (CDRSCTGVMGHPSCATCCACFTSAGKR) constitute a propeptide that is removed on maturation.

Expressed by the venom duct.

The protein resides in the secreted. Probable neurotoxin. This is Conotoxin Im23.5 from Conus imperialis (Imperial cone).